A 245-amino-acid chain; its full sequence is Pyridoxine 5'-phosphate synthase (245 aa).

Asparagine 7 is a binding site for 3-amino-2-oxopropyl phosphate. 9 to 10 contributes to the 1-deoxy-D-xylulose 5-phosphate binding site; the sequence is DH. Arginine 18 contributes to the 3-amino-2-oxopropyl phosphate binding site. Catalysis depends on histidine 43, which acts as the Proton acceptor. 1-deoxy-D-xylulose 5-phosphate-binding residues include arginine 45 and histidine 50. Glutamate 70 functions as the Proton acceptor in the catalytic mechanism. 1-deoxy-D-xylulose 5-phosphate is bound at residue threonine 100. Residue histidine 190 is the Proton donor of the active site. Residues glycine 191 and 212–213 contribute to the 3-amino-2-oxopropyl phosphate site; that span reads GH.

The protein belongs to the PNP synthase family. Homooctamer; tetramer of dimers.

Its subcellular location is the cytoplasm. The catalysed reaction is 3-amino-2-oxopropyl phosphate + 1-deoxy-D-xylulose 5-phosphate = pyridoxine 5'-phosphate + phosphate + 2 H2O + H(+). It functions in the pathway cofactor biosynthesis; pyridoxine 5'-phosphate biosynthesis; pyridoxine 5'-phosphate from D-erythrose 4-phosphate: step 5/5. Its function is as follows. Catalyzes the complicated ring closure reaction between the two acyclic compounds 1-deoxy-D-xylulose-5-phosphate (DXP) and 3-amino-2-oxopropyl phosphate (1-amino-acetone-3-phosphate or AAP) to form pyridoxine 5'-phosphate (PNP) and inorganic phosphate. This Prochlorococcus marinus (strain MIT 9313) protein is Pyridoxine 5'-phosphate synthase.